We begin with the raw amino-acid sequence, 2045 residues long: Non-reducing polyketide synthase pks27 (2045 aa).

Positions 10–247 (IVFGDLTCDS…LTIPIYAPYH (238 aa)) are N-terminal acylcarrier protein transacylase domain (SAT). A Ketosynthase family 3 (KS3) domain is found at 380–813 (HSKLAIIGYS…GGNSSVLIED (434 aa)). Residues C552, H687, and H731 each act as for beta-ketoacyl synthase activity in the active site. The malonyl-CoA:ACP transacylase (MAT) domain stretch occupies residues 913 to 1213 (FAFTGQGSQY…VPTLQRNKDT (301 aa)). The N-terminal hotdog fold stretch occupies residues 1289 to 1422 (HKLVEEKKDG…ASITFPDAKA (134 aa)). Residues 1289 to 1599 (HKLVEEKKDG…AQGVPRRLMD (311 aa)) enclose the PKS/mFAS DH domain. The active-site Proton acceptor; for dehydratase activity is H1321. A C-terminal hotdog fold region spans residues 1442 to 1599 (AARLNTDDRV…AQGVPRRLMD (158 aa)). D1511 (proton donor; for dehydratase activity) is an active-site residue. The disordered stretch occupies residues 1612–1636 (APAGGTLNASQSAAANPAADPSAQA). Over residues 1619-1636 (NASQSAAANPAADPSAQA) the composition is skewed to low complexity. A Carrier domain is found at 1635–1712 (QADSDNWQAA…ELEAFWKQGA (78 aa)). The interval 1640-1709 (NWQAALKIIS…TIKELEAFWK (70 aa)) is product template (PT) domain. An O-(pantetheine 4'-phosphoryl)serine modification is found at S1672. The interval 1735 to 1776 (EAEVDQDKNSSDEDRSSLGTSSYEVISPNTTETTPEITKTSS) is disordered. Positions 1739–1750 (DQDKNSSDEDRS) are enriched in basic and acidic residues. The segment covering 1760–1776 (ISPNTTETTPEITKTSS) has biased composition (low complexity). The tract at residues 1798–2039 (TLFLLPDGSG…AKRLSEMIEG (242 aa)) is thioesterase.

It depends on pantetheine 4'-phosphate as a cofactor.

The protein operates within secondary metabolite biosynthesis. Non-reducing polyketide synthase (NRPKS); part of the gene cluster 27 that mediates the biosynthesis of asparasone A, a sclerotium-specific anthraquinone pigment important for sclerotial survival. Catalyzes the formation of the aromatic polyketide from acetyl coenzyme A and seven malonyl coenzyme A molecules. Through its product template (PT) domain, catalyzes the cyclization of polyketide backbone via C6-C11 aldolcondensation. The polypeptide is Non-reducing polyketide synthase pks27 (Aspergillus flavus (strain ATCC 200026 / FGSC A1120 / IAM 13836 / NRRL 3357 / JCM 12722 / SRRC 167)).